An 88-amino-acid polypeptide reads, in one-letter code: Kunitz-type U15-theraphotoxin-Hhn1h (88 aa).

An N-terminal signal peptide occupies residues 1-27; the sequence is MGTARFLRAVLLLSVLLMVTFPALLSA. A propeptide spanning residues 28-33 is cleaved from the precursor; sequence EHHDGR. The BPTI/Kunitz inhibitor domain occupies 37 to 85; it reads CRLPSGSGDCLRFFEMWYFDGTTCTKFVYGGYGGNDNRFPTEKACMKRC. Cystine bridges form between Cys37/Cys85 and Cys60/Cys81.

The protein belongs to the venom Kunitz-type family. 03 (sub-Kunitz) subfamily. In terms of tissue distribution, expressed by the venom gland.

Its subcellular location is the secreted. Serine protease inhibitor that inhibits trypsin at a molar ratio of 1:1. The chain is Kunitz-type U15-theraphotoxin-Hhn1h from Cyriopagopus hainanus (Chinese bird spider).